A 421-amino-acid polypeptide reads, in one-letter code: Medium-chain specific acyl-CoA dehydrogenase, mitochondrial (421 aa).

The N-terminal 25 residues, 1–25 (MAAMFRRSCRVLRSLSHFGWRSQHT), are a transit peptide targeting the mitochondrion. Lys-79 is subject to N6-acetyllysine. Residue 158-167 (YCVTEPGAGS) participates in FAD binding. Position 167 (Ser-167) interacts with octanoyl-CoA. Lys-179 carries the post-translational modification N6-succinyllysine. Position 191–193 (191–193 (WIT)) interacts with FAD. At Lys-212 the chain carries N6-acetyllysine; alternate. Lys-212 bears the N6-succinyllysine; alternate mark. Residue Ser-216 coordinates octanoyl-CoA. Residues Lys-217, Lys-259, and Lys-271 each carry the N6-acetyllysine; alternate modification. N6-succinyllysine; alternate is present on residues Lys-217, Lys-259, and Lys-271. Asp-278 serves as a coordination point for octanoyl-CoA. Lys-279 carries the N6-acetyllysine modification. Residue Arg-281 participates in octanoyl-CoA binding. Residue Lys-301 is modified to N6-acetyllysine. FAD-binding positions include 306 to 308 (RKT) and 316 to 317 (HQ). 2 residues coordinate octanoyl-CoA: Arg-349 and Thr-351. Thr-351 carries the post-translational modification Phosphothreonine. 374–378 (QVFGG) contributes to the FAD binding site. Glu-401 provides a ligand contact to octanoyl-CoA. Glu-401 functions as the Proton acceptor in the catalytic mechanism. 402 to 405 (GTAQ) is an FAD binding site.

Belongs to the acyl-CoA dehydrogenase family. As to quaternary structure, homotetramer. Interacts with the heterodimeric electron transfer flavoprotein ETF. Requires FAD as cofactor. In terms of processing, acetylated. Could occur at proximity of the cofactor-binding sites and reduce the catalytic activity. Could be deacetylated by SIRT3.

The protein localises to the mitochondrion matrix. It catalyses the reaction a medium-chain 2,3-saturated fatty acyl-CoA + oxidized [electron-transfer flavoprotein] + H(+) = a medium-chain (2E)-enoyl-CoA + reduced [electron-transfer flavoprotein]. The enzyme catalyses pentanoyl-CoA + oxidized [electron-transfer flavoprotein] + H(+) = (2E)-pentenoyl-CoA + reduced [electron-transfer flavoprotein]. The catalysed reaction is hexanoyl-CoA + oxidized [electron-transfer flavoprotein] + H(+) = (2E)-hexenoyl-CoA + reduced [electron-transfer flavoprotein]. It carries out the reaction octanoyl-CoA + oxidized [electron-transfer flavoprotein] + H(+) = (2E)-octenoyl-CoA + reduced [electron-transfer flavoprotein]. It catalyses the reaction decanoyl-CoA + oxidized [electron-transfer flavoprotein] + H(+) = (2E)-decenoyl-CoA + reduced [electron-transfer flavoprotein]. The enzyme catalyses dodecanoyl-CoA + oxidized [electron-transfer flavoprotein] + H(+) = (2E)-dodecenoyl-CoA + reduced [electron-transfer flavoprotein]. The catalysed reaction is tetradecanoyl-CoA + oxidized [electron-transfer flavoprotein] + H(+) = (2E)-tetradecenoyl-CoA + reduced [electron-transfer flavoprotein]. It carries out the reaction oxidized [electron-transfer flavoprotein] + hexadecanoyl-CoA + H(+) = (2E)-hexadecenoyl-CoA + reduced [electron-transfer flavoprotein]. Its pathway is lipid metabolism; mitochondrial fatty acid beta-oxidation. In terms of biological role, medium-chain specific acyl-CoA dehydrogenase is one of the acyl-CoA dehydrogenases that catalyze the first step of mitochondrial fatty acid beta-oxidation, an aerobic process breaking down fatty acids into acetyl-CoA and allowing the production of energy from fats. The first step of fatty acid beta-oxidation consists in the removal of one hydrogen from C-2 and C-3 of the straight-chain fatty acyl-CoA thioester, resulting in the formation of trans-2-enoyl-CoA. Electron transfer flavoprotein (ETF) is the electron acceptor that transfers electrons to the main mitochondrial respiratory chain via ETF-ubiquinone oxidoreductase (ETF dehydrogenase). Among the different mitochondrial acyl-CoA dehydrogenases, medium-chain specific acyl-CoA dehydrogenase acts specifically on acyl-CoAs with saturated 6 to 12 carbons long primary chains. This is Medium-chain specific acyl-CoA dehydrogenase, mitochondrial from Sus scrofa (Pig).